Here is a 341-residue protein sequence, read N- to C-terminus: Probable GDP-mannose transporter 2 (341 aa).

Residues 1 to 11 (MSKHKHEWTES) lie on the Cytoplasmic side of the membrane. Residues 12-32 (VANSGPASILSYCASSILMTV) traverse the membrane as a helical segment. The Lumenal portion of the chain corresponds to 33–46 (TNKFVVNLDNFNMN). The helical transmembrane segment at 47-67 (FVMLFVQSLVCTVTLCILRIV) threads the bilayer. Residues 68–85 (GVANFRSLNRTDVKNWFP) are Cytoplasmic-facing. The helical transmembrane segment at 86–106 (ISLLLVLMIYTSLKSLQYLAV) threads the bilayer. Residue Pro-107 is a topological domain, lumenal. Residues 108-128 (IYTIFKNLTIILIAYGEVLFF) traverse the membrane as a helical segment. At 129–139 (GGKVTSMELTS) the chain is on the cytoplasmic side. A helical transmembrane segment spans residues 140–160 (FIMMVLSSVVATWGDQQAIAI). Residues 161–176 (KASSLEDLDQELVEST) lie on the Lumenal side of the membrane. The chain crosses the membrane as a helical span at residues 177-197 (IFVLNPGYLWMFTNCISSALF). At 198–214 (VLIMRKRIRLTNFKDYD) the chain is on the cytoplasmic side. Residues 215-235 (TMFYNNVLALPLLLVFSFIME) traverse the membrane as a helical segment. The Lumenal segment spans residues 236 to 251 (DWSTKNLSVNLSADSL). N-linked (GlcNAc...) asparagine glycosylation is found at Asn-241 and Asn-245. Residues 252–272 (AAMVISGLMSVGISYCSGWCV) form a helical membrane-spanning segment. Over 273-278 (RVTSST) the chain is Cytoplasmic. A helical membrane pass occupies residues 279–299 (TYSMVGALNKLPIALAGLVFF). Topologically, residues 300 to 303 (DAPK) are lumenal. Residues 304–324 (NFLSFFSIFLGFLSGLLYAVA) form a helical membrane-spanning segment. Topologically, residues 325 to 341 (KQKKIQQQKVLAATLEK) are cytoplasmic.

The protein belongs to the TPT transporter family. SLC35D subfamily.

The protein localises to the golgi apparatus membrane. It is found in the cytoplasmic vesicle membrane. Its subcellular location is the endoplasmic reticulum membrane. Its function is as follows. Involved in the import of GDP-mannose from the cytoplasm into the Golgi lumen. This chain is Probable GDP-mannose transporter 2 (HVG1), found in Saccharomyces cerevisiae (strain Lalvin EC1118 / Prise de mousse) (Baker's yeast).